The sequence spans 172 residues: 3-hydroxydecanoyl-[acyl-carrier-protein] dehydratase (172 aa).

Residue His-71 is part of the active site.

Belongs to the thioester dehydratase family. FabA subfamily. In terms of assembly, homodimer.

It is found in the cytoplasm. The catalysed reaction is a (3R)-hydroxyacyl-[ACP] = a (2E)-enoyl-[ACP] + H2O. The enzyme catalyses (3R)-hydroxydecanoyl-[ACP] = (2E)-decenoyl-[ACP] + H2O. It carries out the reaction (2E)-decenoyl-[ACP] = (3Z)-decenoyl-[ACP]. The protein operates within lipid metabolism; fatty acid biosynthesis. Necessary for the introduction of cis unsaturation into fatty acids. Catalyzes the dehydration of (3R)-3-hydroxydecanoyl-ACP to E-(2)-decenoyl-ACP and then its isomerization to Z-(3)-decenoyl-ACP. Can catalyze the dehydratase reaction for beta-hydroxyacyl-ACPs with saturated chain lengths up to 16:0, being most active on intermediate chain length. This is 3-hydroxydecanoyl-[acyl-carrier-protein] dehydratase from Aliivibrio salmonicida (strain LFI1238) (Vibrio salmonicida (strain LFI1238)).